The sequence spans 383 residues: Putative glutamate--cysteine ligase 2 (383 aa).

This sequence belongs to the glutamate--cysteine ligase type 2 family. YbdK subfamily.

It carries out the reaction L-cysteine + L-glutamate + ATP = gamma-L-glutamyl-L-cysteine + ADP + phosphate + H(+). Functionally, ATP-dependent carboxylate-amine ligase which exhibits weak glutamate--cysteine ligase activity. This chain is Putative glutamate--cysteine ligase 2, found in Clavibacter sepedonicus (Clavibacter michiganensis subsp. sepedonicus).